We begin with the raw amino-acid sequence, 286 residues long: 33 kDa chaperonin (286 aa).

2 disulfide bridges follow: cysteine 225-cysteine 227 and cysteine 258-cysteine 261.

The protein belongs to the HSP33 family. Post-translationally, under oxidizing conditions two disulfide bonds are formed involving the reactive cysteines. Under reducing conditions zinc is bound to the reactive cysteines and the protein is inactive.

The protein localises to the cytoplasm. Redox regulated molecular chaperone. Protects both thermally unfolding and oxidatively damaged proteins from irreversible aggregation. Plays an important role in the bacterial defense system toward oxidative stress. The polypeptide is 33 kDa chaperonin (Shewanella frigidimarina (strain NCIMB 400)).